The chain runs to 242 residues: MTSNLIYPYPTLIPGVLRQRYKRFFADIELASGEIITAHCPNTGPMTGVCTIGSPVYISPSDNPKRKLAYTWEMIQVNNTWVGINTAIPNKVIKYALENQWFAQLKERYTTVRSEVPYGKDNKSRVDFLLTQNEGKSPIYVEVKNTTLCQGEIALFPDTVTSRGQKHLRELMALLPDTKPIMLYFINRGDCYSFAPGDEFDPTYGTLLREAVKKGLEVLPCRFEVTPEGIHYLGLAEFLTKL.

Belongs to the SfsA family.

This is Sugar fermentation stimulation protein homolog from Rippkaea orientalis (strain PCC 8801 / RF-1) (Cyanothece sp. (strain PCC 8801)).